Reading from the N-terminus, the 459-residue chain is MDQSARYADLSLKEEDLIKGGRHILVAYKMKPKSGYGYLEAAAHFAAESSTGTNVEVSTTDDFTKGVDALVYYIDEASEDMRIAYPLELFDRNVTDGRFMLVSFLTLAIGNNQGMGDIEHAKMIDFYVPERCIQMFDGPATDISNLWRILGRPVVNGGYIAGTIIKPKLGLRPEPFAKAAYQFWLGGDFIKNDEPQGNQVFCPLKKVLPLVYDAMKRAQDDTGQAKLFSMNITADDHYEMCARADYALEVFGPDADKLAFLVDGYVGGPGMVTTARRQYPGQYLHYHRAGHGAVTSPSAKRGYTAFVLAKMSRLQGASGIHVGTMGYGKMEGEGDDKIIAYMIERDECQGPVYFQKWYGMKPTTPIISGGMNALRLPGFFENLGHGNVINTAGGGSYGHIDSPAAGAISLRQSYECWKQGADPIEFAKEHKEFARAFESFPKDADKLFPGWREKLGVHK.

N111 lines the substrate pocket. K166 acts as the Proton acceptor in catalysis. A substrate-binding site is contributed by K168. Positions 191, 193, and 194 each coordinate Mg(2+). K191 is subject to N6-carboxylysine. The active-site Proton acceptor is H287. The substrate site is built by R288, H321, and S368.

It belongs to the RuBisCO large chain family. Type II subfamily. In terms of assembly, the complex is approximately 350 kDa when isolated from either T.denitrificans or R.sphaeroides, suggesting a homohexamer or homooctamer structure. Mg(2+) is required as a cofactor.

The catalysed reaction is 2 (2R)-3-phosphoglycerate + 2 H(+) = D-ribulose 1,5-bisphosphate + CO2 + H2O. It carries out the reaction D-ribulose 1,5-bisphosphate + O2 = 2-phosphoglycolate + (2R)-3-phosphoglycerate + 2 H(+). Functionally, ruBisCO catalyzes two reactions: the carboxylation of D-ribulose 1,5-bisphosphate, the primary event in carbon dioxide fixation, as well as the oxidative fragmentation of the pentose substrate. Both reactions occur simultaneously and in competition at the same active site. The sequence is that of Ribulose bisphosphate carboxylase (cbbM) from Thiobacillus denitrificans (strain ATCC 25259 / T1).